Here is a 313-residue protein sequence, read N- to C-terminus: Dioxygenase swnH2 (313 aa).

Fe cation-binding residues include His155, Asp157, and His232.

Belongs to the PhyH family. Homodimer. Requires Fe cation as cofactor.

It functions in the pathway mycotoxin biosynthesis. In terms of biological role, aminotransferase; part of the gene cluster that mediates the biosynthesis of swainsonine (SW), a cytotoxic fungal alkaloid and a potential cancer therapy drug. Swainsonine production occurs via a multibranched pathway and is dispensable for fungal colonization of plants and infection of insect hosts. The first step of swainsonine biosynthesis is the production of the precursor pipecolic acid (PA) via conversion of L-lysine (Lys) to 1-piperideine-6-carboxylate (P6C) by the aminotransferase swnA, the latter being further reduced to PA by the reductase swnR. The PKS-NRPS hybrid synthetase swnK uptakes and condensates PA and malonyl-CoA with and without skipping of the ketoreductase (KR) domain in order to produce 3 intermediates, 1-oxoindolizidine, (1S)-1-hydroxyindolizin, and (1R)-1-hydroxyindolizine; with the transisomer (1S)-1-hydroxyindolizin being predominant. The terminal thioester reductase (TE) domain of swnK is involved in reduction of the thioester bond to release the intermediate aldehydes. The oxidoreductase swnN could contribute to the reduction of 1-oxoindolizidine to (1S)-1-hydroxyindolizin and (1R)-1-hydroxyindolizine, contributing to the major route of SW production. The dioxygenase swnH2 would be responsible for the oxidization of (1R)-1-hydroxyindolizine into (1R,2S)-1,2-dihydroxyindolizine and of (1S)-1-hydroxyindolizin to yield both (1R,2S)-1,2-dihydroxyindolizine and (1S,2S)-1,2-dihydroxyindolizine. The dioxygenase swnH1 then performs the conversion of the 1,2-dihydroxyindolizine epimers to SW. This chain is Dioxygenase swnH2, found in Arthroderma benhamiae (strain ATCC MYA-4681 / CBS 112371) (Trichophyton mentagrophytes).